The sequence spans 351 residues: Probable minor fimbrial subunit LpfD (351 aa).

Positions 1–22 are cleaved as a signal peptide; that stretch reads MKAAIALSLLGCVFGFSGKAFA.

Belongs to the fimbrial protein family.

Its subcellular location is the fimbrium. In terms of biological role, part of the lpfABCC'DE fimbrial operon. LP fimbriae may participate in the interaction with eukaryotic cells by assisting in microcolony formation. In Escherichia coli O157:H7, this protein is Probable minor fimbrial subunit LpfD (lpfD).